Reading from the N-terminus, the 293-residue chain is Histamine N-methyltransferase A (293 aa).

E28 contacts substrate. 5 residues coordinate S-adenosyl-L-methionine: G60, E89, Q94, S120, and I142. Residue N283 participates in substrate binding.

Belongs to the class I-like SAM-binding methyltransferase superfamily. HNMT family. In terms of assembly, monomer.

The protein localises to the cytoplasm. The enzyme catalyses histamine + S-adenosyl-L-methionine = N(tau)-methylhistamine + S-adenosyl-L-homocysteine + H(+). In terms of biological role, inactivates histamine by N-methylation. Plays an important role in degrading histamine and in regulating the airway response to histamine. This chain is Histamine N-methyltransferase A (hnmt-a), found in Xenopus laevis (African clawed frog).